The sequence spans 34 residues: MIIIFIELCRIADSLLWIPKSWRRTSSISTYLIL.

This is an uncharacterized protein from Saccharomyces cerevisiae (strain ATCC 204508 / S288c) (Baker's yeast).